The primary structure comprises 300 residues: Cysteine-rich venom protein (300 aa).

A signal peptide spans 1-21; sequence MLSTMQTVGAVLMLSIVLVAG. Residues 22–24 constitute a propeptide that is removed on maturation; the sequence is RKR. Positions 62–183 constitute an SCP domain; it reads LEMHNKIRAD…GNNKYFVCNY (122 aa).

Post-translationally, contains 11 disulfide bonds. In terms of tissue distribution, expressed by the venom duct.

The protein localises to the secreted. Protease responsible for cleaving the conotoxins from their propeptide precursors. The target propeptide requires minimum four residues including a leucine N-terminal of the cleavage site for efficient substrate processing (example: Xaa-Xaa-Xaa-Leu-Asn-Lys-Arg-toxin). The polypeptide is Cysteine-rich venom protein (Conus textile (Cloth-of-gold cone)).